A 351-amino-acid polypeptide reads, in one-letter code: sn-glycerol-3-phosphate import ATP-binding protein UgpC (351 aa).

The region spanning 4 to 234 is the ABC transporter domain; sequence ITLKDLVKSY…PATLFVAGFI (231 aa). An ATP-binding site is contributed by 36 to 43; the sequence is GPSGCGKS.

This sequence belongs to the ABC transporter superfamily. sn-glycerol-3-phosphate importer (TC 3.A.1.1.3) family. As to quaternary structure, the complex is composed of two ATP-binding proteins (UgpC), two transmembrane proteins (UgpA and UgpE) and a solute-binding protein (UgpB).

The protein localises to the cell inner membrane. The enzyme catalyses sn-glycerol 3-phosphate(out) + ATP + H2O = sn-glycerol 3-phosphate(in) + ADP + phosphate + H(+). Functionally, part of the ABC transporter complex UgpBAEC involved in sn-glycerol-3-phosphate (G3P) import. Responsible for energy coupling to the transport system. The polypeptide is sn-glycerol-3-phosphate import ATP-binding protein UgpC (Ruegeria sp. (strain TM1040) (Silicibacter sp.)).